The following is a 312-amino-acid chain: Ribose-phosphate pyrophosphokinase (312 aa).

ATP contacts are provided by residues 34-36 (DQE) and 93-94 (RQ). Residues histidine 127 and aspartate 167 each contribute to the Mg(2+) site. The active site involves lysine 191. D-ribose 5-phosphate-binding positions include arginine 193, aspartate 217, and 221 to 225 (DSGGT).

It belongs to the ribose-phosphate pyrophosphokinase family. Class I subfamily. As to quaternary structure, homohexamer. The cofactor is Mg(2+).

It localises to the cytoplasm. The enzyme catalyses D-ribose 5-phosphate + ATP = 5-phospho-alpha-D-ribose 1-diphosphate + AMP + H(+). It functions in the pathway metabolic intermediate biosynthesis; 5-phospho-alpha-D-ribose 1-diphosphate biosynthesis; 5-phospho-alpha-D-ribose 1-diphosphate from D-ribose 5-phosphate (route I): step 1/1. Its function is as follows. Involved in the biosynthesis of the central metabolite phospho-alpha-D-ribosyl-1-pyrophosphate (PRPP) via the transfer of pyrophosphoryl group from ATP to 1-hydroxyl of ribose-5-phosphate (Rib-5-P). The sequence is that of Ribose-phosphate pyrophosphokinase from Hyphomonas neptunium (strain ATCC 15444).